The following is a 246-amino-acid chain: 2,3-bisphosphoglycerate-dependent phosphoglycerate mutase (246 aa).

Substrate is bound by residues 8–15 (RHGQSQWN), 21–22 (TG), Arg-60, 87–90 (EKHY), Lys-98, 114–115 (RR), and 183–184 (GN). The active-site Tele-phosphohistidine intermediate is His-9. Glu-87 acts as the Proton donor/acceptor in catalysis.

Belongs to the phosphoglycerate mutase family. BPG-dependent PGAM subfamily. In terms of assembly, homodimer.

It carries out the reaction (2R)-2-phosphoglycerate = (2R)-3-phosphoglycerate. It functions in the pathway carbohydrate degradation; glycolysis; pyruvate from D-glyceraldehyde 3-phosphate: step 3/5. Its function is as follows. Catalyzes the interconversion of 2-phosphoglycerate and 3-phosphoglycerate. The polypeptide is 2,3-bisphosphoglycerate-dependent phosphoglycerate mutase (Dichelobacter nodosus (strain VCS1703A)).